The following is a 463-amino-acid chain: Major capsid protein (463 aa).

Belongs to the NCLDV major capsid protein family. As to quaternary structure, homotrimer.

It is found in the virion. In terms of biological role, major capsid protein that self assembles to form an icosahedral capsid. Represents around 50% of the total virion protein mass. The chain is Major capsid protein (MCP) from Rana tigrina ranavirus.